We begin with the raw amino-acid sequence, 201 residues long: Proteinase inhibitor type-2 CEVI57 (201 aa).

A signal peptide spans 1-23 (MAVYKVSFLAHLLVLGMYLLVST). 3 consecutive repeat copies span residues 27 to 83 (ANAC…DPKN), 84 to 143 (PNIC…IEPK), and 144 to 199 (GCTK…QSIS). Cystine bridges form between C30/C118, C34/C114, C42/C124, C54/C91, C57/C75, C58/C87, C64/C100, and C117/C135.

It belongs to the protease inhibitor I20 (potato type II proteinase inhibitor) family.

The protein is Proteinase inhibitor type-2 CEVI57 (CEVI57) of Solanum lycopersicum (Tomato).